A 345-amino-acid chain; its full sequence is Uroporphyrinogen decarboxylase (345 aa).

Residues R27–R31, F46, D76, Y152, S207, and H320 contribute to the substrate site.

It belongs to the uroporphyrinogen decarboxylase family. As to quaternary structure, homodimer.

The protein localises to the cytoplasm. The catalysed reaction is uroporphyrinogen III + 4 H(+) = coproporphyrinogen III + 4 CO2. Its pathway is porphyrin-containing compound metabolism; protoporphyrin-IX biosynthesis; coproporphyrinogen-III from 5-aminolevulinate: step 4/4. Its function is as follows. Catalyzes the decarboxylation of four acetate groups of uroporphyrinogen-III to yield coproporphyrinogen-III. The protein is Uroporphyrinogen decarboxylase of Oceanobacillus iheyensis (strain DSM 14371 / CIP 107618 / JCM 11309 / KCTC 3954 / HTE831).